The sequence spans 163 residues: Lipoprotein signal peptidase (163 aa).

The next 4 helical transmembrane spans lie at 9-29, 39-59, 67-87, and 92-112; these read YLAI…SALS, VLPF…SFLA, WFFT…LYKS, and LLCI…LDRV. Residues D119 and D137 contribute to the active site. The chain crosses the membrane as a helical span at residues 130–150; the sequence is WPAFNIADSAICVGAALIIWG.

Belongs to the peptidase A8 family.

Its subcellular location is the cell inner membrane. It carries out the reaction Release of signal peptides from bacterial membrane prolipoproteins. Hydrolyzes -Xaa-Yaa-Zaa-|-(S,diacylglyceryl)Cys-, in which Xaa is hydrophobic (preferably Leu), and Yaa (Ala or Ser) and Zaa (Gly or Ala) have small, neutral side chains.. Its pathway is protein modification; lipoprotein biosynthesis (signal peptide cleavage). Functionally, this protein specifically catalyzes the removal of signal peptides from prolipoproteins. The protein is Lipoprotein signal peptidase of Polynucleobacter necessarius subsp. necessarius (strain STIR1).